We begin with the raw amino-acid sequence, 260 residues long: Acyl-coenzyme A diphosphatase FITM2 (260 aa).

At 1–23 (MERLENCAQMFQRKFLNEAFRRH) the chain is on the cytoplasmic side. Residues 24-44 (CPVLLACIALGGSLLKELSPL) traverse the membrane as a helical segment. Over 45–57 (PDSYWNNKRNVLN) the chain is Lumenal. The chain crosses the membrane as a helical span at residues 58 to 78 (VYFVKFCWGWTLWLLLPFITL). Over 79–93 (TNYKLTGSITKVLRR) the chain is Cytoplasmic. A helical membrane pass occupies residues 94-114 (LSSLLVGTLFWYLCTNLFLYI). The Lumenal segment spans residues 115–144 (EHITGSCYESEALLDSIEHQDRKECRLHGG). A helical membrane pass occupies residues 145-165 (FWHGFDISGHCFLLSYCILII). His154 is an active-site residue. Residues 166–189 (LEETSVIRSIQFERHWHRMAINAQ) lie on the Cytoplasmic side of the membrane. The next 2 membrane-spanning stretches (helical) occupy residues 190–210 (FTALSILVIIWVWMFLCTAVY) and 211–231 (FHNIFQKVIGTAFGMLAWYIT). His212 is a catalytic residue. The Cytoplasmic portion of the chain corresponds to 232–260 (YRWWYLQPISPGLPPASASHSEKEPVYKN).

Belongs to the FIT family. FIT2 subfamily.

The protein localises to the endoplasmic reticulum membrane. The catalysed reaction is an acyl-CoA + H2O = an acyl-4'-phosphopantetheine + adenosine 3',5'-bisphosphate + 2 H(+). In terms of biological role, fatty acyl-coenzyme A (CoA) diphosphatase that hydrolyzes fatty acyl-CoA to yield acyl-4'-phosphopantetheine and adenosine 3',5'-bisphosphate. Preferentially hydrolyzes unsaturated long-chain acyl-CoA substrates in the endoplasmic reticulum (ER) lumen. This catalytic activity is required for maintaining ER structure and for lipid droplets (LDs) biogenesis, which are lipid storage organelles involved in maintaining lipid and energy homeostasis. May directly bind to diacylglycerol (DAGs) and triacylglycerol, which is also important for LD biogenesis. May support directional budding of nacent LDs from the ER into the cytosol by reducing DAG levels at sites of LD formation. May play a role in the regulation of cell morphology, ER morphology and cytoskeletal organization. The polypeptide is Acyl-coenzyme A diphosphatase FITM2 (Xenopus laevis (African clawed frog)).